The sequence spans 150 residues: Large ribosomal subunit protein uL13 (150 aa).

The protein belongs to the universal ribosomal protein uL13 family. In terms of assembly, part of the 50S ribosomal subunit.

In terms of biological role, this protein is one of the early assembly proteins of the 50S ribosomal subunit, although it is not seen to bind rRNA by itself. It is important during the early stages of 50S assembly. In Mesoplasma florum (strain ATCC 33453 / NBRC 100688 / NCTC 11704 / L1) (Acholeplasma florum), this protein is Large ribosomal subunit protein uL13.